The chain runs to 279 residues: Phycobilisome rod-core linker polypeptide CpcG1 (279 aa).

In terms of domain architecture, PBS-linker spans 11 to 189 (SSQNQRVEGY…YWRDRQTLNA (179 aa)).

This sequence belongs to the phycobilisome linker protein family. Part of the phycobilisome, a hemidiscoidal structure that is composed of two distinct substructures: a core complex and a number of rods radiating from the core.

The protein resides in the cellular thylakoid membrane. Functionally, rod-core linker protein required for attachment of phycocyanin to allophycocyanin in cores of phycobilisomes. Its function is as follows. Linker polypeptides determine the state of aggregation and the location of the disk-shaped phycobiliprotein units within the phycobilisome and modulate their spectroscopic properties in order to mediate a directed and optimal energy transfer. This Nostoc sp. (strain PCC 7120 / SAG 25.82 / UTEX 2576) protein is Phycobilisome rod-core linker polypeptide CpcG1.